The sequence spans 215 residues: Pyrrolidone-carboxylate peptidase (215 aa).

Residues Glu-78, Cys-141, and His-165 contribute to the active site.

This sequence belongs to the peptidase C15 family. Homotetramer.

The protein localises to the cytoplasm. The enzyme catalyses Release of an N-terminal pyroglutamyl group from a polypeptide, the second amino acid generally not being Pro.. In terms of biological role, removes 5-oxoproline from various penultimate amino acid residues except L-proline. This chain is Pyrrolidone-carboxylate peptidase, found in Streptococcus pyogenes serotype M18 (strain MGAS8232).